The following is a 471-amino-acid chain: Regulator of microtubule dynamics protein 3 (471 aa).

Topologically, residues 1 to 9 (MSSLGTLGG) are mitochondrial intermembrane. A helical transmembrane segment spans residues 10-32 (ARAGLGLLLGTAAGLGFLCALYS). Topologically, residues 33-471 (QRWKRTQRRG…LEELEVILGE (439 aa)) are cytoplasmic. A disordered region spans residues 39–70 (QRRGQSQSQSNSLDYTQTSEPGRQVRPLRAAP). The span at 41-50 (RGQSQSQSNS) shows a compositional bias: low complexity. Ser-44, Ser-46, Ser-50, and Ser-57 each carry phosphoserine. The stretch at 90 to 123 (LDRLEFVLTSLVALRREVEELRSSLQGLAGQIVG) forms a coiled coil. Positions 156-162 (VYFTAAS) match the FFAT motif. Phosphothreonine is present on Thr-159. Positions 169 to 206 (AESEGGYTTANAESDYERDSERESDGDGEDEVSCETVK) are disordered. A phosphoserine mark is found at Ser-182, Ser-192, Ser-212, and Ser-233. Positions 183–193 (DYERDSERESD) are enriched in basic and acidic residues.

This sequence belongs to the RMDN family. Interacts with PTPN2. Interacts with microtubules. Interacts with VAPB. Interacts (via FFAT motif) with MOSPD2 (via MSP domain). Interacts (via phosphorylated FFAT motif) with MOSPD2, VAPA and VAPB. Phosphorylation at Thr-160 of the FFAT motif activates interaction with MOSPD2, VAPA and VAPB.

It is found in the mitochondrion outer membrane. The protein resides in the cytoplasm. It localises to the nucleus. The protein localises to the cytoskeleton. Its subcellular location is the spindle. It is found in the spindle pole. Involved in cellular calcium homeostasis regulation. May participate in differentiation and apoptosis of keratinocytes. Overexpression induces apoptosis. This is Regulator of microtubule dynamics protein 3 from Bos taurus (Bovine).